A 127-amino-acid chain; its full sequence is Protein YwpG (127 aa).

In terms of assembly, interacts with both the D1 and D2 domains of dynamin-like protein DynA.

The protein localises to the cell membrane. This chain is Protein YwpG (ywpG), found in Bacillus subtilis (strain 168).